We begin with the raw amino-acid sequence, 139 residues long: Nucleoside diphosphate kinase (139 aa).

6 residues coordinate ATP: Lys-10, Phe-58, Arg-86, Thr-92, Arg-103, and Asn-113. His-116 serves as the catalytic Pros-phosphohistidine intermediate.

This sequence belongs to the NDK family. As to quaternary structure, homotetramer. Mg(2+) is required as a cofactor.

The protein resides in the cytoplasm. The catalysed reaction is a 2'-deoxyribonucleoside 5'-diphosphate + ATP = a 2'-deoxyribonucleoside 5'-triphosphate + ADP. The enzyme catalyses a ribonucleoside 5'-diphosphate + ATP = a ribonucleoside 5'-triphosphate + ADP. In terms of biological role, major role in the synthesis of nucleoside triphosphates other than ATP. The ATP gamma phosphate is transferred to the NDP beta phosphate via a ping-pong mechanism, using a phosphorylated active-site intermediate. In Nitratidesulfovibrio vulgaris (strain DSM 19637 / Miyazaki F) (Desulfovibrio vulgaris), this protein is Nucleoside diphosphate kinase.